The chain runs to 379 residues: Citrate utilization protein B (379 aa).

[4Fe-4S] cluster contacts are provided by Cys-28, Cys-31, Cys-34, Cys-38, Cys-62, Cys-65, Cys-68, and Cys-72.

This is Citrate utilization protein B (citB) from Escherichia coli.